The following is a 127-amino-acid chain: Protein ApaG (127 aa).

Residues 3 to 127 (DQPPTEIQIS…FRLAAATVFH (125 aa)) form the ApaG domain.

The polypeptide is Protein ApaG (Acidithiobacillus ferrooxidans (strain ATCC 23270 / DSM 14882 / CIP 104768 / NCIMB 8455) (Ferrobacillus ferrooxidans (strain ATCC 23270))).